Consider the following 287-residue polypeptide: Polyamine aminopropyltransferase (287 aa).

The region spanning 5–238 is the PABS domain; that stretch reads EIWYETLHAN…GIMTFAWASQ (234 aa). Glutamine 33 contacts S-methyl-5'-thioadenosine. Spermidine contacts are provided by histidine 64 and aspartate 88. Residues glutamate 108 and 140–141 contribute to the S-methyl-5'-thioadenosine site; that span reads DG. The active-site Proton acceptor is the aspartate 158. 158-161 is a binding site for spermidine; that stretch reads DCTD. Proline 165 contributes to the S-methyl-5'-thioadenosine binding site.

The protein belongs to the spermidine/spermine synthase family. Homodimer or homotetramer.

Its subcellular location is the cytoplasm. The catalysed reaction is S-adenosyl 3-(methylsulfanyl)propylamine + putrescine = S-methyl-5'-thioadenosine + spermidine + H(+). It functions in the pathway amine and polyamine biosynthesis; spermidine biosynthesis; spermidine from putrescine: step 1/1. Its function is as follows. Catalyzes the irreversible transfer of a propylamine group from the amino donor S-adenosylmethioninamine (decarboxy-AdoMet) to putrescine (1,4-diaminobutane) to yield spermidine. The polypeptide is Polyamine aminopropyltransferase (Serratia proteamaculans (strain 568)).